The primary structure comprises 471 residues: Collagen alpha-3(IV) chain (471 aa).

The tract at residues 1–238 is triple-helical region; sequence GLPGRKGPVG…KGKPGDTGPP (238 aa). Residues 1–241 are disordered; that stretch reads GLPGRKGPVG…PGDTGPPAAG (241 aa). Pro residues predominate over residues 52–61; it reads MPGPPGPPGS. The Cell attachment site motif lies at 106–108; it reads RGD. Positions 127-141 are enriched in pro residues; sequence PGPPGPPGQSGPKGP. Residues 165–174 are compositionally biased toward low complexity; it reads SAGEPGMQGE. A compositionally biased stretch (pro residues) spans 175-187; it reads PGPPGPPGDPGPC. Hydroxyproline occurs at positions 232 and 238. The region spanning 246–470 is the Collagen IV NC1 domain; it reads GFVFTRHSQT…SRCQVCMKMR (225 aa). 6 disulfide bridges follow: Cys261-Cys352, Cys294-Cys349, Cys306-Cys312, Cys371-Cys466, Cys405-Cys463, and Cys417-Cys423. Met334 participates in a covalent cross-link: S-Lysyl-methionine sulfilimine (Met-Lys) (interchain with K-452). Residue Lys452 forms an S-Lysyl-methionine sulfilimine (Lys-Met) (interchain with M-334) linkage.

It belongs to the type IV collagen family. In terms of assembly, there are six type IV collagen isoforms, alpha 1(IV)-alpha 6(IV), each of which can form a triple helix structure with 2 other chains to generate type IV collagen network. The alpha 3(IV) chain forms a triple helical protomer with alpha 4(IV) and alpha 5(IV); this triple helical structure dimerizes through NC1-NC1 domain interactions such that the alpha 3(IV), alpha 4(IV) and alpha 5(IV) chains of one protomer connect with the alpha 5(IV), alpha 4(IV) and alpha 3(IV) chains of the opposite promoter, respectively. Interacts with ITGB3. Associates with LAMB2 at the neuromuscular junction and in GBM. In terms of processing, prolines at the third position of the tripeptide repeating unit (G-X-Y) are hydroxylated in some or all of the chains. Type IV collagens contain numerous cysteine residues which are involved in inter- and intramolecular disulfide bonding. 12 of these, located in the NC1 domain, are conserved in all known type IV collagens. Post-translationally, the trimeric structure of the NC1 domains is stabilized by covalent bonds between Lys and Met residues. In terms of processing, phosphorylated. Thought to be phosphorylated by CERT, but CERT does not have kinase activity.

It is found in the secreted. The protein localises to the extracellular space. It localises to the extracellular matrix. The protein resides in the basement membrane. Type IV collagen is the major structural component of glomerular basement membranes (GBM), forming a 'chicken-wire' meshwork together with laminins, proteoglycans and entactin/nidogen. The chain is Collagen alpha-3(IV) chain (COL4A3) from Bos taurus (Bovine).